The primary structure comprises 448 residues: tRNA(Ile)-lysidine synthase (448 aa).

Serine 25–serine 30 contacts ATP.

The protein belongs to the tRNA(Ile)-lysidine synthase family.

The protein localises to the cytoplasm. It carries out the reaction cytidine(34) in tRNA(Ile2) + L-lysine + ATP = lysidine(34) in tRNA(Ile2) + AMP + diphosphate + H(+). Its function is as follows. Ligates lysine onto the cytidine present at position 34 of the AUA codon-specific tRNA(Ile) that contains the anticodon CAU, in an ATP-dependent manner. Cytidine is converted to lysidine, thus changing the amino acid specificity of the tRNA from methionine to isoleucine. The protein is tRNA(Ile)-lysidine synthase of Brucella suis biovar 1 (strain 1330).